The following is an 89-amino-acid chain: Cell division topological specificity factor (89 aa).

Belongs to the MinE family.

In terms of biological role, prevents the cell division inhibition by proteins MinC and MinD at internal division sites while permitting inhibition at polar sites. This ensures cell division at the proper site by restricting the formation of a division septum at the midpoint of the long axis of the cell. The protein is Cell division topological specificity factor of Klebsiella pneumoniae subsp. pneumoniae (strain ATCC 700721 / MGH 78578).